Here is a 517-residue protein sequence, read N- to C-terminus: Steroid 17-alpha-hydroxylase/17,20 lyase (517 aa).

C451 contacts heme.

Belongs to the cytochrome P450 family. It depends on heme as a cofactor.

The protein localises to the membrane. It catalyses the reaction a C21-steroid + reduced [NADPH--hemoprotein reductase] + O2 = a 17alpha-hydroxy-C21-steroid + oxidized [NADPH--hemoprotein reductase] + H2O + H(+). The catalysed reaction is 17alpha-hydroxyprogesterone + reduced [NADPH--hemoprotein reductase] + O2 = androst-4-ene-3,17-dione + acetate + oxidized [NADPH--hemoprotein reductase] + H2O + 2 H(+). It carries out the reaction 17alpha-hydroxypregnenolone + reduced [NADPH--hemoprotein reductase] + O2 = 3beta-hydroxyandrost-5-en-17-one + acetate + oxidized [NADPH--hemoprotein reductase] + H2O + 2 H(+). It functions in the pathway lipid metabolism; steroid biosynthesis. Functionally, conversion of pregnenolone and progesterone to their 17-alpha-hydroxylated products and subsequently to dehydroepiandrosterone (DHEA) and androstenedione. Catalyzes both the 17-alpha-hydroxylation and the 17,20-lyase reaction. This is Steroid 17-alpha-hydroxylase/17,20 lyase (cyp17a1) from Oryzias latipes (Japanese rice fish).